Here is a 171-residue protein sequence, read N- to C-terminus: 3-hydroxydecanoyl-[acyl-carrier-protein] dehydratase (171 aa).

Histidine 71 is an active-site residue.

It belongs to the thioester dehydratase family. FabA subfamily. As to quaternary structure, homodimer.

It localises to the cytoplasm. The enzyme catalyses a (3R)-hydroxyacyl-[ACP] = a (2E)-enoyl-[ACP] + H2O. It carries out the reaction (3R)-hydroxydecanoyl-[ACP] = (2E)-decenoyl-[ACP] + H2O. It catalyses the reaction (2E)-decenoyl-[ACP] = (3Z)-decenoyl-[ACP]. It participates in lipid metabolism; fatty acid biosynthesis. In terms of biological role, necessary for the introduction of cis unsaturation into fatty acids. Catalyzes the dehydration of (3R)-3-hydroxydecanoyl-ACP to E-(2)-decenoyl-ACP and then its isomerization to Z-(3)-decenoyl-ACP. Can catalyze the dehydratase reaction for beta-hydroxyacyl-ACPs with saturated chain lengths up to 16:0, being most active on intermediate chain length. This Rhizobium meliloti (strain 1021) (Ensifer meliloti) protein is 3-hydroxydecanoyl-[acyl-carrier-protein] dehydratase.